Here is a 104-residue protein sequence, read N- to C-terminus: Large ribosomal subunit protein uL23 (104 aa).

It belongs to the universal ribosomal protein uL23 family. In terms of assembly, part of the 50S ribosomal subunit. Contacts protein L29, and trigger factor when it is bound to the ribosome.

Functionally, one of the early assembly proteins it binds 23S rRNA. One of the proteins that surrounds the polypeptide exit tunnel on the outside of the ribosome. Forms the main docking site for trigger factor binding to the ribosome. The polypeptide is Large ribosomal subunit protein uL23 (Nostoc punctiforme (strain ATCC 29133 / PCC 73102)).